We begin with the raw amino-acid sequence, 275 residues long: uncharacterized protein (275 aa).

Positions 75 to 157 (AKELIKNRRL…AELKQAAEQG (83 aa)) form a coiled coil.

This is an uncharacterized protein from Bacillus subtilis (strain 168).